The chain runs to 530 residues: Rho GTPase-activating protein 36 (530 aa).

Residues 1-19 (MPPLLLLSALIFLVNVLGG) form the signal peptide. The region spanning 209–409 (MSLNPIAKQI…AMIDNWDVLF (201 aa)) is the Rho-GAP domain. The interval 471-512 (GQSKPFDEGSSEEPAVPPGTARSHDDEEGAGNPLILEQDRPL) is disordered.

May interacts (via the Rho-GAP domain) with the active form of RAC1.

GTPase activator for the Rho-type GTPases by converting them to an inactive GDP-bound state. The protein is Rho GTPase-activating protein 36 (ARHGAP36) of Bos taurus (Bovine).